Consider the following 414-residue polypeptide: L-cysteine:1D-myo-inositol 2-amino-2-deoxy-alpha-D-glucopyranoside ligase (414 aa).

Cys44 serves as a coordination point for Zn(2+). L-cysteinyl-5'-AMP is bound by residues 44–47 (CGIT), Thr59, and 82–84 (NIT). The 'HIGH' region motif lies at 46 to 56 (ITPYDSTHLGH). A 'ERGGDP' region motif is present at residues 188 to 193 (ERGGDP). Trp228 contributes to the L-cysteinyl-5'-AMP binding site. Position 232 (Cys232) interacts with Zn(2+). 250–252 (GSD) contributes to the L-cysteinyl-5'-AMP binding site. Position 257 (His257) interacts with Zn(2+). An L-cysteinyl-5'-AMP-binding site is contributed by Ile284. The short motif at 290 to 294 (KMSKS) is the 'KMSKS' region element.

Belongs to the class-I aminoacyl-tRNA synthetase family. MshC subfamily. In terms of assembly, monomer. The cofactor is Zn(2+).

It catalyses the reaction 1D-myo-inositol 2-amino-2-deoxy-alpha-D-glucopyranoside + L-cysteine + ATP = 1D-myo-inositol 2-(L-cysteinylamino)-2-deoxy-alpha-D-glucopyranoside + AMP + diphosphate + H(+). Catalyzes the ATP-dependent condensation of GlcN-Ins and L-cysteine to form L-Cys-GlcN-Ins. This chain is L-cysteine:1D-myo-inositol 2-amino-2-deoxy-alpha-D-glucopyranoside ligase, found in Corynebacterium aurimucosum (strain ATCC 700975 / DSM 44827 / CIP 107346 / CN-1) (Corynebacterium nigricans).